The chain runs to 743 residues: Apo-petrobactin exporter (743 aa).

12 helical membrane-spanning segments follow: residues 20 to 40, 199 to 219, 223 to 243, 258 to 278, 303 to 323, 337 to 357, 406 to 426, 561 to 581, 584 to 604, 613 to 633, 672 to 692, and 694 to 714; these read WITL…LPQV, ADVK…ILLY, ILAI…SPTL, AISI…LFLI, GGAI…LLLA, VAVF…LLIF, WTII…VPRI, DEAV…LVYL, IVAM…ALGA, MGAP…LVAL, AGLI…QVLV, and FGIV…PLLV.

The protein belongs to the resistance-nodulation-cell division (RND) (TC 2.A.6) family. MmpL subfamily.

It localises to the cell membrane. Its function is as follows. Exports the siderophore petrobactin. This Bacillus anthracis protein is Apo-petrobactin exporter.